Consider the following 3343-residue polypeptide: Breast cancer type 2 susceptibility protein homolog (3343 aa).

Positions 1-40 (MTVEYKRRPTFWEIFKARCSTADLGPISLNWFEELFSEAP) are interaction with PALB2. The segment at 40-60 (PPYNTEHPEESEYKPQGHEPQ) is disordered. Residues 45–56 (EHPEESEYKPQG) show a composition bias toward basic and acidic residues. Ser70 carries the phosphoserine modification. The tract at residues 348 to 381 (IEPRDSEPLDPSVTNQKPLYSQSGDISSEAGQCS) is disordered. Over residues 359–381 (SVTNQKPLYSQSGDISSEAGQCS) the composition is skewed to polar residues. Ser475 and Ser736 each carry phosphoserine. Positions 622–982 (PDSSIKRSNL…DKWSEFLDPL (361 aa)) are interaction with NPM1. BRCA2 repeat units follow at residues 984–1018 (NHKL…DIEE), 1197–1231 (KEME…DIEN), 1405–1439 (MKEF…QETE), 1503–1537 (KEPT…ETQY), 1645–1669 (CYTG…WLRE), 1828–1845 (FITT…IFTD), 1939–1973 (PSRT…EIDG), and 2019–2053 (SSFV…EFDL). Positions 985 to 2050 (HKLGGSFRTA…LHKVKGMLEE (1066 aa)) are interaction with RAD51. Disordered regions lie at residues 2059–2138 (TLQH…VLGT), 2297–2356 (PFCS…SDKS), and 2377–2407 (DSKN…PQFN). Ser2063 bears the Phosphoserine mark. Composition is skewed to polar residues over residues 2083–2094 (PEYSVSSKLQKT) and 2101–2125 (SPSN…QLSQ). Residues 2233-2300 (RKRGGMAGVA…EPVTCGPFCS (68 aa)) form an interaction with HSF2BP region. Polar residues-rich tracts occupy residues 2307–2320 (TQSP…QGLQ) and 2332–2342 (GKSSSNPTVSA). The segment at 2313–2475 (TSPAQGLQSK…SPKQLYMYGV (163 aa)) is interaction with FANCD2. The span at 2344–2356 (RSERTRHSVSDKS) shows a compositional bias: basic and acidic residues. An interaction with SEM1 region spans residues 2411 to 2762 (MSSLQNARDL…QRVYPLQWVE (352 aa)). The short motif at 2612–2628 (AAKTLVLCVSDIISLST) is the Nuclear export signal; masked by interaction with SEM1 element. The disordered stretch occupies residues 3114–3163 (DSPKWSTPNKDPTREPYPASTCSASDLASGGQLPRSSPTDQQSYRSPLSC). Residues 3147-3163 (PRSSPTDQQSYRSPLSC) show a composition bias toward polar residues. Ser3222 is modified (phosphoserine; by CDK1 and CDK2). 2 disordered regions span residues 3231 to 3255 (PPRS…WSRA) and 3289 to 3343 (VGGS…PDYS). Ser3250 carries the phosphoserine modification. A compositionally biased stretch (polar residues) spans 3295–3310 (VFPSDSTRTEGPSAST). Basic and acidic residues predominate over residues 3318-3334 (SKRESLRDCRDDSDGKL).

In terms of assembly, monomer and dimer. Interacts with RAD51; regulates RAD51 recruitment and function at sites of DNA repair. Interacts with SEM1, WDR16, USP11, DMC1, ROCK2 and NPM1. Interacts with both nonubiquitinated and monoubiquitinated FANCD2; this complex also includes XRCC3 and phosphorylated FANCG. Part of a BRCA complex containing BRCA1, BRCA2 and PALB2. Component of the homologous recombination repair (HR) complex composed of ERCC5/XPG, BRCA2, PALB2, DSS1 and RAD51. Within the complex, interacts with ERCC5/XPG and PALB2. Interacts directly with PALB2 which may serve as a scaffold for a HR complex containing PALB2, BRCA2, RAD51C, RAD51 and XRCC3. Interacts with BRCA1 only in the presence of PALB2 which serves as the bridging protein. Interacts with POLH; the interaction is direct. Interacts with the TREX-2 complex subunits PCID2 and SEM1. Interacts with HSF2BP and BRME1; the interaction with HSF2BP is direct and allows the formation of a ternary complex. The complex BRME1:HSF2BP:BRCA2 interacts with SPATA22, MEIOB and RAD51. Phosphorylated by ATM upon irradiation-induced DNA damage. Phosphorylation by CHEK1 and CHEK2 regulates interaction with RAD51. Phosphorylation at Ser-3222 by CDK1 and CDK2 is low in S phase when recombination is active, but increases as cells progress towards mitosis; this phosphorylation prevents homologous recombination-dependent repair during S phase and G2 by inhibiting RAD51 binding. Post-translationally, ubiquitinated in the absence of DNA damage; this does not lead to proteasomal degradation. In contrast, ubiquitination in response to DNA damage leads to proteasomal degradation. Highest expression in testis. Also expressed in spleen, skeletal muscle, thymus, mammary gland, heart, ovary, prostate, liver, lung, kidney and brain.

The protein resides in the nucleus. It localises to the cytoplasm. The protein localises to the cytoskeleton. Its subcellular location is the microtubule organizing center. It is found in the centrosome. In terms of biological role, involved in double-strand break repair and/or homologous recombination. Binds RAD51 and potentiates recombinational DNA repair by promoting assembly of RAD51 onto single-stranded DNA (ssDNA). Acts by targeting RAD51 to ssDNA over double-stranded DNA, enabling RAD51 to displace replication protein-A (RPA) from ssDNA and stabilizing RAD51-ssDNA filaments by blocking ATP hydrolysis. Part of a PALB2-scaffolded HR complex containing RAD51C and which is thought to play a role in DNA repair by HR. May participate in S phase checkpoint activation. Binds selectively to ssDNA, and to ssDNA in tailed duplexes and replication fork structures. May play a role in the extension step after strand invasion at replication-dependent DNA double-strand breaks; together with PALB2 is involved in both POLH localization at collapsed replication forks and DNA polymerization activity. In concert with NPM1, regulates centrosome duplication. Interacts with the TREX-2 complex (transcription and export complex 2) subunits PCID2 and SEM1, and is required to prevent R-loop-associated DNA damage and thus transcription-associated genomic instability, independently of its known role in homologous recombination. The sequence is that of Breast cancer type 2 susceptibility protein homolog from Rattus norvegicus (Rat).